Here is a 424-residue protein sequence, read N- to C-terminus: Neurotensin receptor type 1 (424 aa).

The segment at 1-23 (MHLNSSVPQGTPGEPDAQPFSGP) is disordered. At 1-68 (MHLNSSVPQG…TDIYSKVLVT (68 aa)) the chain is on the extracellular side. Residues asparagine 4, asparagine 38, and asparagine 42 are each glycosylated (N-linked (GlcNAc...) asparagine). Residues 69 to 89 (AIYLALFVVGTVGNSVTAFTL) traverse the membrane as a helical segment. At 90-103 (ARKKSLQSLQSTVH) the chain is on the cytoplasmic side. Residues 104–123 (YHLGSLALSDLLILLLAMPV) traverse the membrane as a helical segment. Over 124–143 (ELYNFIWVHHPWAFGDAGCR) the chain is Extracellular. A disulfide bridge connects residues cysteine 142 and cysteine 225. A helical membrane pass occupies residues 144–165 (GYYFLRDACTYATALNVASLSV). Topologically, residues 166 to 185 (ERYLAICHPFKAKTLMSRSR) are cytoplasmic. The chain crosses the membrane as a helical span at residues 186-206 (TKKFISAIWLASALLAIPMLF). Over 207-235 (TMGLQNRSGDGTHPGGLVCTPIVDTATVK) the chain is Extracellular. The helical transmembrane segment at 236–260 (VVIQVNTFMSFLFPMLVISILNTVI) threads the bilayer. Topologically, residues 261–308 (ANKLTVMVHQAAEQGRVCTVGTHNGLEHSTFNMTIEPGRVQALRHGVL) are cytoplasmic. Residues 309–330 (VLRAVVIAFVVCWLPYHVRRLM) form a helical membrane-spanning segment. Residues 326–349 (VRRLMFCYISDEQWTTFLFDFYHY) form a neurotensin binding region. Over 331–348 (FCYISDEQWTTFLFDFYH) the chain is Extracellular. A helical membrane pass occupies residues 349–369 (YFYMLTNALFYVSSAINPILY). Topologically, residues 370 to 424 (NLVSANFRQVFLSTLACLCPGWRHRRKKRPTFSRKPNSMSSNHAFSTSATRETLY) are cytoplasmic. Residues cysteine 386 and cysteine 388 are each lipidated (S-palmitoyl cysteine). Residues 397–424 (KRPTFSRKPNSMSSNHAFSTSATRETLY) form a disordered region. Positions 403–424 (RKPNSMSSNHAFSTSATRETLY) are enriched in polar residues.

It belongs to the G-protein coupled receptor 1 family. Neurotensin receptor subfamily. NTSR1 sub-subfamily. As to quaternary structure, interacts (palmitoylated form) with GNA11. N-glycosylated. Post-translationally, palmitoylated; this is required for normal localization at membrane rafts and normal GNA11-mediated activation of down-stream signaling cascades. The palmitoylation level increases in response to neurotensin treatment. In terms of tissue distribution, detected in brain and small intestine.

Its subcellular location is the cell membrane. It is found in the membrane raft. Functionally, G-protein coupled receptor for the tridecapeptide neurotensin (NTS). Signaling is effected via G proteins that activate a phosphatidylinositol-calcium second messenger system. Signaling leads to the activation of downstream MAP kinases and protects cells against apoptosis. This chain is Neurotensin receptor type 1 (Ntsr1), found in Rattus norvegicus (Rat).